We begin with the raw amino-acid sequence, 154 residues long: Isotocin-neurophysin IT 1 (154 aa).

The N-terminal stretch at 1-20 (MSGSMFSVFSLLYLLSVCSA) is a signal peptide. The cysteines at positions 21 and 26 are disulfide-linked. Glycine 29 bears the Glycine amide mark. Disulfide bonds link cysteine 42–cysteine 86, cysteine 45–cysteine 59, cysteine 53–cysteine 76, cysteine 60–cysteine 66, cysteine 93–cysteine 105, cysteine 99–cysteine 117, and cysteine 106–cysteine 111.

Belongs to the vasopressin/oxytocin family.

Isotocin causes contraction of smooth muscles. The protein is Isotocin-neurophysin IT 1 of Catostomus commersonii (White sucker).